The following is a 429-amino-acid chain: C4-dicarboxylate transport protein (429 aa).

8 consecutive transmembrane segments (helical) span residues 9-29 (VLYV…HYYP), 45-65 (LIKM…IAGM), 79-99 (LLYF…ATHI), 149-169 (GEIL…AHLG), 185-205 (VLFG…FGAM), 223-243 (LIGT…GTIA), 308-328 (IYMT…LTWM), and 356-376 (AATL…ILGI).

Belongs to the dicarboxylate/amino acid:cation symporter (DAACS) (TC 2.A.23) family.

Its subcellular location is the cell inner membrane. In terms of biological role, responsible for the transport of dicarboxylates such as succinate, fumarate, and malate from the periplasm across the membrane. The sequence is that of C4-dicarboxylate transport protein from Burkholderia lata (strain ATCC 17760 / DSM 23089 / LMG 22485 / NCIMB 9086 / R18194 / 383).